The chain runs to 339 residues: Ketol-acid reductoisomerase (NADP(+)) (339 aa).

A KARI N-terminal Rossmann domain is found at 1-182 (MRVYYDRDAD…GGGRAGIIET (182 aa)). Residues 24–27 (YGSQ), arginine 48, serine 51, serine 53, and 83–86 (DELQ) contribute to the NADP(+) site. Residue histidine 108 is part of the active site. Glycine 134 serves as a coordination point for NADP(+). The KARI C-terminal knotted domain occupies 183–328 (TFKEECETDL…AKLRDMMPWI (146 aa)). Mg(2+) is bound by residues aspartate 191, glutamate 195, glutamate 227, and glutamate 231. Serine 252 is a binding site for substrate.

This sequence belongs to the ketol-acid reductoisomerase family. Requires Mg(2+) as cofactor.

The enzyme catalyses (2R)-2,3-dihydroxy-3-methylbutanoate + NADP(+) = (2S)-2-acetolactate + NADPH + H(+). It carries out the reaction (2R,3R)-2,3-dihydroxy-3-methylpentanoate + NADP(+) = (S)-2-ethyl-2-hydroxy-3-oxobutanoate + NADPH + H(+). The protein operates within amino-acid biosynthesis; L-isoleucine biosynthesis; L-isoleucine from 2-oxobutanoate: step 2/4. It participates in amino-acid biosynthesis; L-valine biosynthesis; L-valine from pyruvate: step 2/4. In terms of biological role, involved in the biosynthesis of branched-chain amino acids (BCAA). Catalyzes an alkyl-migration followed by a ketol-acid reduction of (S)-2-acetolactate (S2AL) to yield (R)-2,3-dihydroxy-isovalerate. In the isomerase reaction, S2AL is rearranged via a Mg-dependent methyl migration to produce 3-hydroxy-3-methyl-2-ketobutyrate (HMKB). In the reductase reaction, this 2-ketoacid undergoes a metal-dependent reduction by NADPH to yield (R)-2,3-dihydroxy-isovalerate. This chain is Ketol-acid reductoisomerase (NADP(+)), found in Bradyrhizobium diazoefficiens (strain JCM 10833 / BCRC 13528 / IAM 13628 / NBRC 14792 / USDA 110).